Here is a 719-residue protein sequence, read N- to C-terminus: Probable disease resistance protein At4g14610 (719 aa).

Positions 25–73 (SLPENLAALQKAIEVLKTKHDDVKRRVDKEEFLGRRHRLSQVQVEIERL) form a coiled coil. Residues 114–418 (EENLVAQVEE…NELEKILGCP (305 aa)) form the NB-ARC domain. 156 to 163 (GMGGVGKT) contacts ATP. 3 LRR repeats span residues 400–421 (AVRR…PTCP), 422–444 (QLTT…FFRF), and 447–469 (NLVV…ISEV).

Belongs to the disease resistance NB-LRR family.

In terms of biological role, probable disease resistance protein. This Arabidopsis thaliana (Mouse-ear cress) protein is Probable disease resistance protein At4g14610.